A 190-amino-acid polypeptide reads, in one-letter code: NADH dehydrogenase [ubiquinone] iron-sulfur protein 3 (190 aa).

The protein belongs to the complex I 30 kDa subunit family. In terms of assembly, complex I is composed of at least 49 different subunits. This is a component of the iron-sulfur (IP) fragment of the enzyme.

The protein resides in the mitochondrion inner membrane. It catalyses the reaction a ubiquinone + NADH + 5 H(+)(in) = a ubiquinol + NAD(+) + 4 H(+)(out). Core subunit of the mitochondrial membrane respiratory chain NADH dehydrogenase (Complex I) that is believed to belong to the minimal assembly required for catalysis. Complex I functions in the transfer of electrons from NADH to the respiratory chain. The immediate electron acceptor for the enzyme is believed to be ubiquinone. This is NADH dehydrogenase [ubiquinone] iron-sulfur protein 3 (NAD9) from Arabidopsis thaliana (Mouse-ear cress).